The following is a 561-amino-acid chain: Transmembrane protein 151B (561 aa).

The segment covering Met-1 to Glu-10 has biased composition (low complexity). The disordered stretch occupies residues Met-1 to Pro-42. Residues Ser-11–Gly-22 show a composition bias toward gly residues. The next 2 helical transmembrane spans lie at Cys-59–Thr-79 and Tyr-106–Trp-126. Polar residues predominate over residues Val-489–Met-507. A disordered region spans residues Val-489–Pro-523. A compositionally biased stretch (acidic residues) spans Asn-510–Ala-519.

It belongs to the TMEM151 family.

The protein localises to the membrane. The polypeptide is Transmembrane protein 151B (Tmem151b) (Mus musculus (Mouse)).